Reading from the N-terminus, the 323-residue chain is Delta(7)-sterol 5(6)-desaturase ERG3B (323 aa).

3 helical membrane passes run Ala67–Leu87, Ile112–Gly132, and Ser150–Ile170. Residues Ile157–Gly285 form the Fatty acid hydroxylase domain. Positions His171–His175 match the Histidine box-1 motif. Positions His184–His188 match the Histidine box-2 motif. A Histidine box-3 motif is present at residues His262–His266.

It belongs to the sterol desaturase family.

It localises to the endoplasmic reticulum membrane. The catalysed reaction is episterol + 2 Fe(II)-[cytochrome b5] + O2 + 2 H(+) = 5-dehydroepisterol + 2 Fe(III)-[cytochrome b5] + 2 H2O. It participates in steroid metabolism; ergosterol biosynthesis. Its function is as follows. C-5 sterol desaturase; part of the third module of ergosterol biosynthesis pathway that includes the late steps of the pathway. ERG3A and ERG3BB catalyze the introduction of a C-5 double bond in the B ring to produce 5-dehydroepisterol. The third module or late pathway involves the ergosterol synthesis itself through consecutive reactions that mainly occur in the endoplasmic reticulum (ER) membrane. Firstly, the squalene synthase ERG9 catalyzes the condensation of 2 farnesyl pyrophosphate moieties to form squalene, which is the precursor of all steroids. Squalene synthase is crucial for balancing the incorporation of farnesyl diphosphate (FPP) into sterol and nonsterol isoprene synthesis. Secondly, squalene is converted into lanosterol by the consecutive action of the squalene epoxidase ERG1 and the lanosterol synthase ERG7. Then, the delta(24)-sterol C-methyltransferase ERG6 methylates lanosterol at C-24 to produce eburicol. Eburicol is the substrate of the sterol 14-alpha demethylase encoded by CYP51A, CYP51B and CYP51C, to yield 4,4,24-trimethyl ergosta-8,14,24(28)-trienol. CYP51B encodes the enzyme primarily responsible for sterol 14-alpha-demethylation, and plays an essential role in ascospore formation. CYP51A encodes an additional sterol 14-alpha-demethylase, induced on ergosterol depletion and responsible for the intrinsic variation in azole sensitivity. The third CYP51 isoform, CYP51C, does not encode a sterol 14-alpha-demethylase, but is required for full virulence on host wheat ears. The C-14 reductase ERG24 then reduces the C14=C15 double bond which leads to 4,4-dimethylfecosterol. A sequence of further demethylations at C-4, involving the C-4 demethylation complex containing the C-4 methylsterol oxidases ERG25, the sterol-4-alpha-carboxylate 3-dehydrogenase ERG26 and the 3-keto-steroid reductase ERG27, leads to the production of fecosterol via 4-methylfecosterol. ERG28 has a role as a scaffold to help anchor ERG25, ERG26 and ERG27 to the endoplasmic reticulum. The C-8 sterol isomerase ERG2 then catalyzes the reaction which results in unsaturation at C-7 in the B ring of sterols and thus converts fecosterol to episterol. The sterol-C5-desaturases ERG3A and ERG3BB then catalyze the introduction of a C-5 double bond in the B ring to produce 5-dehydroepisterol. The C-22 sterol desaturases ERG5A and ERG5B further convert 5-dehydroepisterol into ergosta-5,7,22,24(28)-tetraen-3beta-ol by forming the C-22(23) double bond in the sterol side chain. Finally, ergosta-5,7,22,24(28)-tetraen-3beta-ol is substrate of the C-24(28) sterol reductase ERG4 to produce ergosterol. The protein is Delta(7)-sterol 5(6)-desaturase ERG3B of Gibberella zeae (strain ATCC MYA-4620 / CBS 123657 / FGSC 9075 / NRRL 31084 / PH-1) (Wheat head blight fungus).